The following is a 143-amino-acid chain: Transcriptional regulator MraZ (143 aa).

2 SpoVT-AbrB domains span residues 5 to 47 (EYQH…SLEE) and 76 to 119 (AAEV…DKSK).

This sequence belongs to the MraZ family. As to quaternary structure, forms oligomers.

The protein localises to the cytoplasm. It localises to the nucleoid. The chain is Transcriptional regulator MraZ from Acetivibrio thermocellus (strain ATCC 27405 / DSM 1237 / JCM 9322 / NBRC 103400 / NCIMB 10682 / NRRL B-4536 / VPI 7372) (Clostridium thermocellum).